We begin with the raw amino-acid sequence, 455 residues long: MSQRQQFQFLLSFLILIFLKFIIQIRCDESNGVIIIKNIEDGGSGSGTVSYCQMEQIRDEYITIKTNYGIVSSIGSTTASGSVDGKKEFSLIFNQLIPSDIGYEYFFLRWGTNKQTIATLTDPFLNPYRFNIVHLNRTDLYSIQPTTNNSYLVENLNSISKQVTFNSLIFVNRKSPFFFIFSNFNKVCDNKNNFNMEILYPNNNNNDDFNNSNNNNVDNSNFCSSIQYGNQLVTIKSMSSGNYISSEGSTNAWDIGNKFIKTIPLSSELTDSNYFKIITFENNKIGFLDKFKSFWSWNNTNVEVSSTMLKNQKFNLEPVLNNPSCSKNCYYIKTGNSGYIKEYITKNSVNGNLLNSGSSDDKTMFLIKLLPICSKDINNYGTSSSTTSTTSSSSSSSSSTTTATTMATTTTSKITTTSNINDSFGDDENLINSSSVIKFSTPIIMIIIILINIKF.

The signal sequence occupies residues M1 to C27. At E29–S434 the chain is on the extracellular side. N-linked (GlcNAc...) asparagine glycosylation is found at N136, N148, N210, and N298. Residues S383–T402 form a disordered region. N-linked (GlcNAc...) asparagine glycans are attached at residues N421 and N432. Residues S435–F455 form a helical membrane-spanning segment.

The protein localises to the membrane. This is an uncharacterized protein from Dictyostelium discoideum (Social amoeba).